The primary structure comprises 134 residues: Small ribosomal subunit protein uS9 (134 aa).

Residues 98–114 (SKQELKSHGFLTRDPRK) are compositionally biased toward basic and acidic residues. The tract at residues 98-134 (SKQELKSHGFLTRDPRKKERKKYGHKKARKSFQFSKR) is disordered. The segment covering 115–134 (KERKKYGHKKARKSFQFSKR) has biased composition (basic residues).

The protein belongs to the universal ribosomal protein uS9 family.

The protein is Small ribosomal subunit protein uS9 of Chlamydia caviae (strain ATCC VR-813 / DSM 19441 / 03DC25 / GPIC) (Chlamydophila caviae).